The primary structure comprises 351 residues: UDP-3-O-acylglucosamine N-acyltransferase (351 aa).

H240 (proton acceptor) is an active-site residue.

This sequence belongs to the transferase hexapeptide repeat family. LpxD subfamily. Homotrimer.

It catalyses the reaction a UDP-3-O-[(3R)-3-hydroxyacyl]-alpha-D-glucosamine + a (3R)-hydroxyacyl-[ACP] = a UDP-2-N,3-O-bis[(3R)-3-hydroxyacyl]-alpha-D-glucosamine + holo-[ACP] + H(+). It participates in bacterial outer membrane biogenesis; LPS lipid A biosynthesis. Its function is as follows. Catalyzes the N-acylation of UDP-3-O-acylglucosamine using 3-hydroxyacyl-ACP as the acyl donor. Is involved in the biosynthesis of lipid A, a phosphorylated glycolipid that anchors the lipopolysaccharide to the outer membrane of the cell. The protein is UDP-3-O-acylglucosamine N-acyltransferase of Ectopseudomonas mendocina (strain ymp) (Pseudomonas mendocina).